A 279-amino-acid polypeptide reads, in one-letter code: Putative short-chain type dehydrogenase/reductase MSMEG_6031/MSMEI_5872 (279 aa).

11–33 (FITGAARGQGRSHAVRLAEEGAD) serves as a coordination point for NAD(+). An Isoglutamyl lysine isopeptide (Lys-Gln) (interchain with Q-Cter in protein Pup) cross-link involves residue K65. S158 is a binding site for substrate. The active-site Proton acceptor is Y171.

Belongs to the short-chain dehydrogenases/reductases (SDR) family.

The polypeptide is Putative short-chain type dehydrogenase/reductase MSMEG_6031/MSMEI_5872 (Mycolicibacterium smegmatis (strain ATCC 700084 / mc(2)155) (Mycobacterium smegmatis)).